The following is a 336-amino-acid chain: Phospho-N-acetylmuramoyl-pentapeptide-transferase (336 aa).

10 helical membrane passes run 3–23 (LSIM…PRFI), 52–72 (MGGT…SIIL), 79–99 (NLGA…IGFL), 123–143 (LIAG…SAIN), 144–164 (IFGF…FWVV), 175–195 (GIDG…GIIA), 201–221 (FDIL…FVFN), 227–247 (VFMG…ISIA), 255–275 (LFIG…VAYF), and 315–335 (VDAF…AILY).

Belongs to the glycosyltransferase 4 family. MraY subfamily. Mg(2+) serves as cofactor.

It localises to the cell membrane. It carries out the reaction UDP-N-acetyl-alpha-D-muramoyl-L-alanyl-gamma-D-glutamyl-L-lysyl-D-alanyl-D-alanine + di-trans,octa-cis-undecaprenyl phosphate = Mur2Ac(oyl-L-Ala-gamma-D-Glu-L-Lys-D-Ala-D-Ala)-di-trans,octa-cis-undecaprenyl diphosphate + UMP. Its pathway is cell wall biogenesis; peptidoglycan biosynthesis. Catalyzes the initial step of the lipid cycle reactions in the biosynthesis of the cell wall peptidoglycan: transfers peptidoglycan precursor phospho-MurNAc-pentapeptide from UDP-MurNAc-pentapeptide onto the lipid carrier undecaprenyl phosphate, yielding undecaprenyl-pyrophosphoryl-MurNAc-pentapeptide, known as lipid I. The sequence is that of Phospho-N-acetylmuramoyl-pentapeptide-transferase from Streptococcus agalactiae serotype Ia (strain ATCC 27591 / A909 / CDC SS700).